The primary structure comprises 574 residues: High-affinity methionine permease (574 aa).

Residues M1 to L61 are Cytoplasmic-facing. K28 participates in a covalent cross-link: Glycyl lysine isopeptide (Lys-Gly) (interchain with G-Cter in ubiquitin). A helical membrane pass occupies residues G62 to V82. Residues S83–S92 lie on the Extracellular side of the membrane. Residues V93 to V113 form a helical membrane-spanning segment. The Cytoplasmic portion of the chain corresponds to Y114–F140. A helical membrane pass occupies residues F141–I161. Residues N162–G182 are Extracellular-facing. Residues I183–L203 traverse the membrane as a helical segment. The Cytoplasmic segment spans residues Y204 to N207. A helical transmembrane segment spans residues I208–L228. The Extracellular portion of the chain corresponds to G229–T293. The helical transmembrane segment at S294–P314 threads the bilayer. Over K315–R340 the chain is Cytoplasmic. Residues A341–Q361 traverse the membrane as a helical segment. Residues G362–N418 are Extracellular-facing. A helical transmembrane segment spans residues L419–Y439. The Cytoplasmic segment spans residues W440–A455. A helical transmembrane segment spans residues G456–V476. Topologically, residues P477–Y490 are extracellular. Residues W491–W511 traverse the membrane as a helical segment. The Cytoplasmic portion of the chain corresponds to A512–L574. Phosphothreonine is present on T552. A Phosphoserine modification is found at S573.

It to yeast low affinity methionine permease (MUP3).

The protein localises to the membrane. In terms of biological role, high affinity permease for methionine. This is High-affinity methionine permease (MUP1) from Saccharomyces cerevisiae (strain ATCC 204508 / S288c) (Baker's yeast).